The following is a 429-amino-acid chain: Adenylosuccinate synthetase (429 aa).

GTP is bound by residues 13 to 19 (GDEGKGK) and 41 to 43 (GHT). The active-site Proton acceptor is the Asp14. Positions 14 and 41 each coordinate Mg(2+). IMP is bound by residues 14–17 (DEGK), 39–42 (NAGH), Thr130, Arg144, Gln225, Thr240, and Arg304. The active-site Proton donor is His42. 300–306 (ATTGRRR) provides a ligand contact to substrate. GTP is bound by residues Arg306, 332–334 (KLD), and 417–419 (STG).

Belongs to the adenylosuccinate synthetase family. In terms of assembly, homodimer. Mg(2+) serves as cofactor.

It localises to the cytoplasm. It carries out the reaction IMP + L-aspartate + GTP = N(6)-(1,2-dicarboxyethyl)-AMP + GDP + phosphate + 2 H(+). The protein operates within purine metabolism; AMP biosynthesis via de novo pathway; AMP from IMP: step 1/2. Plays an important role in the de novo pathway of purine nucleotide biosynthesis. Catalyzes the first committed step in the biosynthesis of AMP from IMP. In Buchnera aphidicola subsp. Baizongia pistaciae (strain Bp), this protein is Adenylosuccinate synthetase.